The chain runs to 207 residues: Ras-related protein RABH1d (207 aa).

16–23 (GDQSVGKT) serves as a coordination point for GTP. Positions 38-46 (YQATIGIDF) match the Effector region motif. GTP-binding positions include 64–68 (DTAGQ), 122–125 (NKTD), and 152–153 (SA). S-geranylgeranyl cysteine attachment occurs at residues Cys205 and Cys207. Cys207 carries the post-translational modification Cysteine methyl ester.

The protein belongs to the small GTPase superfamily. Rab family.

Its subcellular location is the golgi apparatus membrane. Protein transport. Regulator of membrane traffic from the Golgi apparatus towards the endoplasmic reticulum (ER). The chain is Ras-related protein RABH1d (RABH1D) from Arabidopsis thaliana (Mouse-ear cress).